Reading from the N-terminus, the 162-residue chain is Large ribosomal subunit protein bL17 (162 aa).

The tract at residues 118 to 162 (RAPAAAPEAEEKGEKKAAGKAEKAPKAAKAPKAEKKPAKKAAKAE) is disordered. Over residues 126–162 (AEEKGEKKAAGKAEKAPKAAKAPKAEKKPAKKAAKAE) the composition is skewed to basic and acidic residues.

Belongs to the bacterial ribosomal protein bL17 family. Part of the 50S ribosomal subunit. Contacts protein L32.

The chain is Large ribosomal subunit protein bL17 from Anaeromyxobacter dehalogenans (strain 2CP-C).